The chain runs to 357 residues: Arginine kinase Pro c 2.0101 (357 aa).

Residues 9-91 enclose the Phosphagen kinase N-terminal domain; the sequence is KLEEGFKKLE…FDPIIEDYHK (83 aa). An L-arginine-binding site is contributed by 64-68; the sequence is GVGIY. The Phosphagen kinase C-terminal domain occupies 119–356; that stretch reads FVISTRVRCG…LELIKIEKEM (238 aa). ATP contacts are provided by residues 122 to 126 and His-185; that span reads STRVR. Glu-225 lines the L-arginine pocket. Arg-229 contributes to the ATP binding site. Cys-271 is an L-arginine binding site. ATP is bound by residues 280–284 and 309–314; these read RASVH and RGTRGE. Position 314 (Glu-314) interacts with L-arginine.

Belongs to the ATP:guanido phosphotransferase family. Glycosylated. Muscle (at protein level).

The enzyme catalyses L-arginine + ATP = N(omega)-phospho-L-arginine + ADP + H(+). In terms of biological role, catalyzes the reversible transfer of high energy ATP gamma-phosphate group to L-arginine. The chain is Arginine kinase Pro c 2.0101 from Procambarus clarkii (Red swamp crayfish).